A 565-amino-acid polypeptide reads, in one-letter code: Proline--tRNA ligase (565 aa).

This sequence belongs to the class-II aminoacyl-tRNA synthetase family. ProS type 1 subfamily. Homodimer.

It localises to the cytoplasm. The enzyme catalyses tRNA(Pro) + L-proline + ATP = L-prolyl-tRNA(Pro) + AMP + diphosphate. Functionally, catalyzes the attachment of proline to tRNA(Pro) in a two-step reaction: proline is first activated by ATP to form Pro-AMP and then transferred to the acceptor end of tRNA(Pro). As ProRS can inadvertently accommodate and process non-cognate amino acids such as alanine and cysteine, to avoid such errors it has two additional distinct editing activities against alanine. One activity is designated as 'pretransfer' editing and involves the tRNA(Pro)-independent hydrolysis of activated Ala-AMP. The other activity is designated 'posttransfer' editing and involves deacylation of mischarged Ala-tRNA(Pro). The misacylated Cys-tRNA(Pro) is not edited by ProRS. The protein is Proline--tRNA ligase of Francisella tularensis subsp. novicida (strain U112).